A 150-amino-acid polypeptide reads, in one-letter code: Small ribosomal subunit protein bS6 (150 aa).

The interval 92-150 (KGINKPAKPKKTFKKTFVARKFSRDDESKTHSTEEPRRANTKSTYKKSTSFSQDNKNKK) is disordered. Basic residues predominate over residues 98-109 (AKPKKTFKKTFV). The segment covering 113–129 (FSRDDESKTHSTEEPRR) has biased composition (basic and acidic residues). Over residues 132–141 (TKSTYKKSTS) the composition is skewed to low complexity.

Belongs to the bacterial ribosomal protein bS6 family.

Functionally, binds together with bS18 to 16S ribosomal RNA. In Mycoplasmopsis pulmonis (strain UAB CTIP) (Mycoplasma pulmonis), this protein is Small ribosomal subunit protein bS6.